Here is a 443-residue protein sequence, read N- to C-terminus: Putative F-box/FBD/LRR-repeat protein At5g22670 (443 aa).

In terms of domain architecture, F-box spans glutamine 10–asparagine 56. 5 LRR repeats span residues serine 139–aspartate 165, asparagine 166–arginine 191, tyrosine 219–aspartate 243, asparagine 275–glycine 300, and tyrosine 325–leucine 353. The 52-residue stretch at leucine 361–leucine 412 folds into the FBD domain.

The chain is Putative F-box/FBD/LRR-repeat protein At5g22670 from Arabidopsis thaliana (Mouse-ear cress).